Here is a 59-residue protein sequence, read N- to C-terminus: Potassium channel toxin alpha-KTx 15.4 (59 aa).

The first 22 residues, 1 to 22 (MKFSSIILLTLLICSMSIFGNC), serve as a signal peptide directing secretion. Gln23 bears the Pyrrolidone carboxylic acid mark. Disulfide bonds link Cys30–Cys50, Cys35–Cys55, and Cys39–Cys57.

In terms of tissue distribution, expressed by the venom gland.

It localises to the secreted. Functionally, blocker of A-type voltage-gated potassium channels of cerebellar granular cells. May also inhibit Kv4/KCND when coexpressed with DPP6 or DPP10. The occlusion of the outer entry of the K(+) conducting pore is partially reversible and affects both open and closed channels. It shares the same target in rat brain than BmTX3 (AC Q8I0L5) and AmmTX3 (AC P60208). The protein is Potassium channel toxin alpha-KTx 15.4 of Androctonus australis (Sahara scorpion).